Reading from the N-terminus, the 481-residue chain is p-aminobenzoyl-glutamate hydrolase subunit B (481 aa).

Forms a heterodimer with AbgA. It depends on Mn(2+) as a cofactor.

Its function is as follows. Component of the p-aminobenzoyl-glutamate hydrolase multicomponent enzyme system which catalyzes the cleavage of p-aminobenzoyl-glutamate (PABA-GLU) to form p-aminobenzoate (PABA) and glutamate. AbgAB does not degrade dipeptides and the physiological role of abgABT should be clarified. The polypeptide is p-aminobenzoyl-glutamate hydrolase subunit B (abgB) (Escherichia coli (strain K12)).